The following is a 488-amino-acid chain: Putative serine carboxypeptidase-like 30 (488 aa).

The first 28 residues, 1-28, serve as a signal peptide directing secretion; it reads MDNHTKSFSSLLISLWFTALLILVEMVS. 3 disulfide bridges follow: Cys99–Cys368, Cys262–Cys275, and Cys299–Cys336. Asn150 is a glycosylation site (N-linked (GlcNAc...) asparagine). Residue Ser192 is part of the active site. A glycan (N-linked (GlcNAc...) asparagine) is linked at Asn263. Asn364 and Asn375 each carry an N-linked (GlcNAc...) asparagine glycan. Catalysis depends on residues Asp405 and His457.

Belongs to the peptidase S10 family. Expression not detected.

The protein resides in the secreted. Its function is as follows. Probable carboxypeptidase. This chain is Putative serine carboxypeptidase-like 30 (SCPL30), found in Arabidopsis thaliana (Mouse-ear cress).